The sequence spans 122 residues: Large ribosomal subunit protein uL14 (122 aa).

It belongs to the universal ribosomal protein uL14 family. In terms of assembly, part of the 50S ribosomal subunit. Forms a cluster with proteins L3 and L19. In the 70S ribosome, L14 and L19 interact and together make contacts with the 16S rRNA in bridges B5 and B8.

Its function is as follows. Binds to 23S rRNA. Forms part of two intersubunit bridges in the 70S ribosome. The chain is Large ribosomal subunit protein uL14 from Clostridium botulinum (strain Alaska E43 / Type E3).